A 1458-amino-acid chain; its full sequence is Anaphase-promoting complex subunit 1 (1458 aa).

Residues 186–210 are disordered; that stretch reads QSIKSSRNRRRESSFSREKNPDLTR. Residues 196 to 210 show a composition bias toward basic and acidic residues; sequence RESSFSREKNPDLTR. 4 PC repeats span residues 873–895, 959–982, 1006–1024, and 1099–1124; these read GLLLGLASSYLGSMDAKVTKLLS, AAGFSLGLINLGRGSNLPGMSDLK, GAIMALTMIYMKTNDLEVA, and GICFSLGLRFAGTGNPKAKEILINFL.

Belongs to the APC1 family. As to quaternary structure, the APC/C is composed of at least 13 subunits: apc1, apc2, nuc2, apc4, apc5, cut9, apc8, apc10, apc11, hcn1, apc13, apc14 and apc15.

Functionally, component of the anaphase-promoting complex/cyclosome (APC/C), a cell cycle-regulated E3 ubiquitin-protein ligase complex that controls progression through mitosis and the G1 phase of the cell cycle. The APC/C is thought to confer substrate specificity and, in the presence of ubiquitin-conjugating E2 enzymes, it catalyzes the formation of protein-ubiquitin conjugates that are subsequently degraded by the 26S proteasome. Mutations to this protein prevent the exit from mitosis. The sequence is that of Anaphase-promoting complex subunit 1 (cut4) from Schizosaccharomyces pombe (strain 972 / ATCC 24843) (Fission yeast).